The chain runs to 462 residues: Centrosomal protein of 55 kDa (462 aa).

Residues 1 to 11 are compositionally biased toward basic and acidic residues; sequence MSSRSPKDLIK. A disordered region spans residues 1–26; that stretch reads MSSRSPKDLIKSKWGSRPSSSKSDTA. Residues 12 to 23 are compositionally biased toward low complexity; the sequence is SKWGSRPSSSKS. A coiled-coil region spans residues 50–400; it reads KMAEKGRSRL…TQLESLKQLH (351 aa). Phosphoserine is present on residues S96 and S99. The tract at residues 157-235 is interaction with TSG101; the sequence is ANCFNSSMNS…EGYLQVEKQK (79 aa). Residues 160-214 are interaction with PDCD6IP; that stretch reads FNSSMNSIHEKEMQLKDALEKNQQWLVYDQQREAYVKGLLAKIFELEKRTETAAA. The interval 354–462 is required for localization to the interphase centrosome and to the midbody during cytokinesis; sequence QMQACTLDFE…LLVHVEYCMK (109 aa). The segment at 410-430 is disordered; that stretch reads PLQREPESRVKATSPKSPSAA. Residues S423, S426, and S428 each carry the phosphoserine modification. S434 carries the phosphoserine; by PLK1 modification.

As to quaternary structure, homodimer. Interacts (phosphorylated on Ser-423 and Ser-426) with PLK1; the interaction is indirect via the MTMR3:MTMR4 heterooligomer, occurs during early mitosis, regulates the phosphorylation of CEP55 by PLK1 and its recruitment to the midbody where it can mediate cell abscission. Interacts with AKAP9/CG-NAP; the interaction occurs in interphase and is lost upon mitotic entry. Interacts with PCNT/Kendrin; the interaction occurs in interphase and is lost upon mitotic entry. Directly interacts with PDCD6IP; this interaction is required for PDCD6IP targeting to the midbody; CEP55 binds PDCD6IP in a 2:1 stoichiometry; PDCD6IP competes with TSG101 for the same binding site. Interacts with TSG101; TSG101 competes with PDCD6IP for the same binding site; interaction is required for cytokinesis. Interacts with MVB12A, VPS37B, VPS37C and VPS28. In terms of processing, there is a hierachy of phosphorylation, where both Ser-423 and Ser-426 are phosphorylated at the onset of mitosis, prior to Ser-434. Phosphorylation at Ser-423 and Ser-426 is required for dissociation from the centrosome at the G2/M boundary. Phosphorylation at the 3 sites, Ser-423, Ser-426 and Ser-434, is required for protein function at the final stages of cell division to complete cytokinesis successfully.

It is found in the cytoplasm. Its subcellular location is the cytoskeleton. It localises to the microtubule organizing center. The protein localises to the centrosome. The protein resides in the centriole. It is found in the cleavage furrow. Its subcellular location is the midbody. It localises to the midbody ring. In terms of biological role, plays a role in mitotic exit and cytokinesis. Recruits PDCD6IP and TSG101 to midbody during cytokinesis. Required for successful completion of cytokinesis. Not required for microtubule nucleation. Plays a role in the development of the brain and kidney. In Mus musculus (Mouse), this protein is Centrosomal protein of 55 kDa.